The sequence spans 235 residues: UPF0758 protein A1S_2918 (235 aa).

A disordered region spans residues 1 to 20 (MNTSIKNWPEQERPRERLLQ). Positions 9–18 (PEQERPRERL) are enriched in basic and acidic residues. The 123-residue stretch at 105–227 (SLHSSHLVLD…SFSFAEQQLL (123 aa)) folds into the MPN domain. Zn(2+) is bound by residues His-176, His-178, and Asp-189. Positions 176 to 189 (HNHPFGSPQPSPED) match the JAMM motif motif.

It belongs to the UPF0758 family.

This is UPF0758 protein A1S_2918 from Acinetobacter baumannii (strain ATCC 17978 / DSM 105126 / CIP 53.77 / LMG 1025 / NCDC KC755 / 5377).